Consider the following 20-residue polypeptide: Thylakoid lumenal 20 kDa protein (20 aa).

The disordered stretch occupies residues 1–20; it reads RDVDVGSFLPKSPSDPSMVL.

Its subcellular location is the plastid. It localises to the chloroplast thylakoid lumen. The protein is Thylakoid lumenal 20 kDa protein of Spinacia oleracea (Spinach).